Reading from the N-terminus, the 1239-residue chain is Anillin (1239 aa).

4 disordered regions span residues 32–67 (CSVP…SGGG), 230–265 (EAPP…RTKQ), 493–621 (FDNQ…MCNG), and 684–716 (GSTQ…NSFS). The segment covering 53–63 (RSRSPGGQSAA) has biased composition (low complexity). Positions 126-371 (EQAEGGALNP…ENKGTGGQSQ (246 aa)) are interaction with and bundling of F-actin. A compositionally biased stretch (basic and acidic residues) spans 252 to 265 (PKKDEVDEASRTKQ). Residues 500-518 (SSVAAQARPPAPAPSRVVR) are compositionally biased toward low complexity. Pro residues predominate over residues 519-528 (PMPPPPPPPI). A compositionally biased stretch (basic and acidic residues) spans 551-563 (EDSKRARKSHSDR). Residues 594–610 (DEEETESCMDESDDQSQ) are compositionally biased toward acidic residues. Residues 699-716 (ASRLSLGSKGTTASNSFS) are compositionally biased toward polar residues. Serine 712 is subject to Phosphoserine. At threonine 740 the chain carries Phosphothreonine. Serine 744 and serine 754 each carry phosphoserine. A Phosphothreonine modification is found at threonine 831. Residues 834–861 (DDEEMQNAREVNDASQAQDKIKKLLSEV) are a coiled coil. Positions 1106-1230 (SVEYKGFLTM…WCAYLNKALT (125 aa)) constitute a PH domain.

Interacts with and bundles F-actin. As to expression, accumulates in the ring canals that interconnect cells of the germline cysts in males and the ovarian follicles in females. These structures develop from arrested contractile rings after a specialized cytokinesis in which the closing of the invaginating plasma membrane is incomplete. Also concentrates in the arrested cleavage furrows that initially link the oocyte to its 15 nurse cells in the early egg chamber and is subsequently lost from these furrows as germline cell division is completed.

The protein localises to the nucleus. The protein resides in the cytoplasm. It is found in the cytoskeleton. Its subcellular location is the cell cortex. It localises to the cell projection. The protein localises to the cilium. The protein resides in the flagellum. Its function is as follows. Required for cytokinesis. Essential for the structural integrity of the cleavage furrow and for completion of cleavage furrow ingression and proper formation of the midbody. Required during cellularization of syncytial embryos for the proper formation and function of the furrow canals, the stable inward folds of the plasma membrane which separate the peripheral nuclei. Also required for the formation of the pole cells, the progenitors of the adult germline which are formed by cytokinesis of the cytoplasmic buds at the posterior pole of the syncytial embryo. Essential for embryonic viability. In Drosophila melanogaster (Fruit fly), this protein is Anillin (scra).